The primary structure comprises 445 residues: RCC1 domain-containing protein RUG3, mitochondrial (445 aa).

Residues 1 to 22 (MAALSHRLRSFTRRFSSTRTTQ) constitute a mitochondrion transit peptide. 7 RCC1 repeats span residues 47–101 (TLQL…DSSS), 118–169 (DGDL…ALTH), 171–221 (GDVF…AITE), 222–279 (SGEL…ALTK), 280–331 (EGQL…ALTE), 333–383 (GKVL…AITD), and 385–442 (GELW…CLVS).

Interacts with ATM. As to expression, mostly expressed in roots and rosette leaves of young seedlings, and, to a lower extent, in the flowers and siliques of mature plants. Preferentially expressed in the vascular tissues.

The protein resides in the mitochondrion. Regulates DNA damage response (DDR) synergistically with ATM. Together with ATM, involved in the splicing of the ND2/NAD2 mRNA. Required for the accumulation of mitochondrial respiratory chain complex I. Negative regulator of plant responses to abscisic acid (ABA). May have a pivotal role in vegetative growth and the phase transition from vegetative to reproductive growth. In Arabidopsis thaliana (Mouse-ear cress), this protein is RCC1 domain-containing protein RUG3, mitochondrial.